A 670-amino-acid polypeptide reads, in one-letter code: DEAD-box ATP-dependent RNA helicase 16 (670 aa).

A compositionally biased stretch (low complexity) spans 1–10; it reads MAAAAAASSM. Residues 1–97 form a disordered region; it reads MAAAAAASSM…EEREVSFDEL (97 aa). Composition is skewed to basic and acidic residues over residues 18 to 30 and 40 to 49; these read AATE…HDEA and NDGHTAHAAE. Positions 92–120 match the Q motif motif; the sequence is VSFDELGLDEQLKRALRKKGLDKATPIQR. Positions 123 to 306 constitute a Helicase ATP-binding domain; sequence IPLILEGKDV…KLLLHNPFIL (184 aa). An ATP-binding site is contributed by 136–143; sequence AKTGSGKT. The DEAD box signature appears at 254–257; sequence DEAD. Positions 340-523 constitute a Helicase C-terminal domain; the sequence is LVLLKLELIQ…PFPLLTKNAV (184 aa). Residues 616 to 670 are disordered; that stretch reads DIDKPRRRKRMGFKGGSGRSSDPLKTFSAEGKSRRRGRKERDGEQDRRKRKKVES. Positions 654 to 670 are enriched in basic and acidic residues; sequence KERDGEQDRRKRKKVES.

It belongs to the DEAD box helicase family. DDX56/DBP9 subfamily.

It carries out the reaction ATP + H2O = ADP + phosphate + H(+). The polypeptide is DEAD-box ATP-dependent RNA helicase 16 (Oryza sativa subsp. japonica (Rice)).